The sequence spans 195 residues: Protein GrpE (195 aa).

A compositionally biased stretch (basic and acidic residues) spans 1–20; that stretch reads MSSKEQKTPDEQVLDQKEAA. The interval 1–40 is disordered; that stretch reads MSSKEQKTPDEQVLDQKEAAKGQQADAAPETADVADPRDE.

It belongs to the GrpE family. Homodimer.

The protein localises to the cytoplasm. In terms of biological role, participates actively in the response to hyperosmotic and heat shock by preventing the aggregation of stress-denatured proteins, in association with DnaK and GrpE. It is the nucleotide exchange factor for DnaK and may function as a thermosensor. Unfolded proteins bind initially to DnaJ; upon interaction with the DnaJ-bound protein, DnaK hydrolyzes its bound ATP, resulting in the formation of a stable complex. GrpE releases ADP from DnaK; ATP binding to DnaK triggers the release of the substrate protein, thus completing the reaction cycle. Several rounds of ATP-dependent interactions between DnaJ, DnaK and GrpE are required for fully efficient folding. The polypeptide is Protein GrpE (Pectobacterium atrosepticum (strain SCRI 1043 / ATCC BAA-672) (Erwinia carotovora subsp. atroseptica)).